Here is a 404-residue protein sequence, read N- to C-terminus: S-adenosylmethionine synthase (404 aa).

ATP is bound at residue His-17. Asp-19 is a Mg(2+) binding site. Glu-45 serves as a coordination point for K(+). L-methionine is bound by residues Glu-58 and Gln-101. Positions 101 to 111 (QSPDIAMGVDQ) are flexible loop. ATP is bound by residues 177-179 (DGK), 244-245 (RF), Asp-253, 259-260 (RK), Ala-276, and Lys-280. Residue Asp-253 coordinates L-methionine. An L-methionine-binding site is contributed by Lys-284.

This sequence belongs to the AdoMet synthase family. Homotetramer; dimer of dimers. Mg(2+) serves as cofactor. The cofactor is K(+).

The protein resides in the cytoplasm. The catalysed reaction is L-methionine + ATP + H2O = S-adenosyl-L-methionine + phosphate + diphosphate. The protein operates within amino-acid biosynthesis; S-adenosyl-L-methionine biosynthesis; S-adenosyl-L-methionine from L-methionine: step 1/1. Functionally, catalyzes the formation of S-adenosylmethionine (AdoMet) from methionine and ATP. The overall synthetic reaction is composed of two sequential steps, AdoMet formation and the subsequent tripolyphosphate hydrolysis which occurs prior to release of AdoMet from the enzyme. The polypeptide is S-adenosylmethionine synthase (Geobacillus thermodenitrificans (strain NG80-2)).